Consider the following 325-residue polypeptide: Plasminogen (325 aa).

Kringle domains follow at residues 80–146 and 159–217; these read ACVK…VPSC and LTPA…VLSV. 4 cysteine pairs are disulfide-bonded: C81–C146, C102–C135, C124–C141, and C188–C212.

This sequence belongs to the peptidase S1 family. Plasminogen subfamily.

The protein resides in the secreted. It carries out the reaction Preferential cleavage: Lys-|-Xaa &gt; Arg-|-Xaa, higher selectivity than trypsin. Converts fibrin into soluble products.. Plasmin dissolves the fibrin of blood clots and acts as a proteolytic factor in a variety of other processes including embryonic development, tissue remodeling, tumor invasion, and inflammation. The sequence is that of Plasminogen from Petromyzon marinus (Sea lamprey).